Here is a 526-residue protein sequence, read N- to C-terminus: NAD(P)H-quinone oxidoreductase chain 4 2 (526 aa).

14 helical membrane passes run F6–I26, W36–G56, L91–F111, P113–V133, L137–W157, F169–F189, L212–H232, T243–L263, A275–T295, I306–D326, A332–A352, I375–A397, V417–M437, and V464–V484.

It belongs to the complex I subunit 4 family.

It localises to the cellular thylakoid membrane. It catalyses the reaction a plastoquinone + NADH + (n+1) H(+)(in) = a plastoquinol + NAD(+) + n H(+)(out). The enzyme catalyses a plastoquinone + NADPH + (n+1) H(+)(in) = a plastoquinol + NADP(+) + n H(+)(out). NDH-1 shuttles electrons from NAD(P)H, via FMN and iron-sulfur (Fe-S) centers, to quinones in the respiratory chain. The immediate electron acceptor for the enzyme in this species is believed to be plastoquinone. Couples the redox reaction to proton translocation (for every two electrons transferred, four hydrogen ions are translocated across the cytoplasmic membrane), and thus conserves the redox energy in a proton gradient. The polypeptide is NAD(P)H-quinone oxidoreductase chain 4 2 (Picosynechococcus sp. (strain ATCC 27264 / PCC 7002 / PR-6) (Agmenellum quadruplicatum)).